Reading from the N-terminus, the 244-residue chain is Isoprenyl transferase (244 aa).

Asp-23 is an active-site residue. Asp-23 contacts Mg(2+). Substrate-binding positions include 24-27, Trp-28, Arg-36, His-40, and 68-70; these read GNGR and STE. The active-site Proton acceptor is the Asn-71. Substrate is bound by residues Trp-72, Arg-74, Arg-191, and 197 to 199; that span reads RMS. Glu-210 lines the Mg(2+) pocket.

Belongs to the UPP synthase family. Homodimer. Mg(2+) serves as cofactor.

Catalyzes the condensation of isopentenyl diphosphate (IPP) with allylic pyrophosphates generating different type of terpenoids. The polypeptide is Isoprenyl transferase (Lactococcus lactis subsp. lactis (strain IL1403) (Streptococcus lactis)).